The sequence spans 185 residues: MSVNDLRPGTTFIYEGNLFVVIEQSFSKTGRQQGKVSVKAKNLRTGSRVEITFTGGEKVEKAMIERKDMQYLYNDGTDAYLMDTDTYEQIQIPMTRLEWESKFLTDGLMIKMTEYDGEVLGISLPDKVELEVTEAEAAVKGDTTSGALKKAVVETGLDIMVPLFVNVGTKVIISTTDGKYSGRAQ.

This sequence belongs to the elongation factor P family.

The protein localises to the cytoplasm. It participates in protein biosynthesis; polypeptide chain elongation. Involved in peptide bond synthesis. Stimulates efficient translation and peptide-bond synthesis on native or reconstituted 70S ribosomes in vitro. Probably functions indirectly by altering the affinity of the ribosome for aminoacyl-tRNA, thus increasing their reactivity as acceptors for peptidyl transferase. The sequence is that of Elongation factor P from Mesoplasma florum (strain ATCC 33453 / NBRC 100688 / NCTC 11704 / L1) (Acholeplasma florum).